The sequence spans 979 residues: Oncostatin-M-specific receptor subunit beta (979 aa).

The first 27 residues, 1–27 (MALFAVFQTTFFLTLLSLRTYQSEVLA), serve as a signal peptide directing secretion. Topologically, residues 28 to 740 (ERLPLTPVSL…VTTPDEHSSM (713 aa)) are extracellular. An N-linked (GlcNAc...) asparagine glycan is attached at Asn-163. Cys-245 and Cys-255 form a disulfide bridge. N-linked (GlcNAc...) asparagine glycans are attached at residues Asn-326 and Asn-380. 4 Fibronectin type-III domains span residues 335 to 428 (NPFS…TLEA), 433 to 528 (APDV…DPEN), 529 to 623 (KEVE…SQEL), and 625 to 736 (PSDN…TPDE). A WSXWS motif motif is present at residues 415-419 (WSEWS). Asn-446 and Asn-580 each carry an N-linked (GlcNAc...) asparagine glycan. A helical transmembrane segment spans residues 741-761 (LIHILLPMVFCVLLIMVMCYL). The Cytoplasmic portion of the chain corresponds to 762–979 (KSQWIKETCY…TLLDPGEHYC (218 aa)). Positions 770-778 (CYPDIPDPY) match the Box 1 motif motif. 2 positions are modified to phosphoserine: Ser-826 and Ser-889.

Belongs to the type I cytokine receptor family. Type 2 subfamily. Heterodimer composed of OSMR and IL6ST (type II OSM receptor). Heterodimer with IL31RA to form the IL31 receptor. In terms of tissue distribution, expressed in keratinocytes (at protein level). Expressed at relatively high levels in all neural cells as well as fibroblast and epithelial cells.

The protein resides in the membrane. Its function is as follows. Associates with IL31RA to form the IL31 receptor. Binds IL31 to activate STAT3 and possibly STAT1 and STAT5. Capable of transducing OSM-specific signaling events. This Homo sapiens (Human) protein is Oncostatin-M-specific receptor subunit beta (OSMR).